The primary structure comprises 534 residues: Glucans biosynthesis protein D (534 aa).

The segment at residues 1–30 is a signal peptide (tat-type signal); it reads MRMQRRHLLKNAAAALAALGLPALPQWALA.

Belongs to the OpgD/OpgG family. Predicted to be exported by the Tat system. The position of the signal peptide cleavage has not been experimentally proven.

It localises to the periplasm. It functions in the pathway glycan metabolism; osmoregulated periplasmic glucan (OPG) biosynthesis. Its function is as follows. Probably involved in the control of the structural glucose backbone of osmoregulated periplasmic glucans (OPGs). The chain is Glucans biosynthesis protein D from Xanthomonas oryzae pv. oryzae (strain PXO99A).